The sequence spans 84 residues: uncharacterized protein (84 aa).

In terms of domain architecture, 2Fe-2S ferredoxin-type spans 2–84 (ARVTLRITGT…RAKGDIEIEM (83 aa)). [2Fe-2S] cluster-binding residues include C37, C42, C45, and C74.

Requires [2Fe-2S] cluster as cofactor.

This is an uncharacterized protein from Escherichia coli O6:H1 (strain CFT073 / ATCC 700928 / UPEC).